We begin with the raw amino-acid sequence, 550 residues long: Chaperonin GroEL (550 aa).

ATP contacts are provided by residues 30–33 (TLGP), lysine 51, 87–91 (DGTTT), glycine 415, and aspartate 496.

This sequence belongs to the chaperonin (HSP60) family. As to quaternary structure, forms a cylinder of 14 subunits composed of two heptameric rings stacked back-to-back. Interacts with the co-chaperonin GroES.

Its subcellular location is the cytoplasm. The enzyme catalyses ATP + H2O + a folded polypeptide = ADP + phosphate + an unfolded polypeptide.. In terms of biological role, together with its co-chaperonin GroES, plays an essential role in assisting protein folding. The GroEL-GroES system forms a nano-cage that allows encapsulation of the non-native substrate proteins and provides a physical environment optimized to promote and accelerate protein folding. The chain is Chaperonin GroEL from Rickettsia bellii (strain OSU 85-389).